The following is a 206-amino-acid chain: Small ribosomal subunit protein uS4 (206 aa).

The S4 RNA-binding domain occupies 96 to 156 (GRLDNVVYRM…EKSKNQLRIQ (61 aa)).

This sequence belongs to the universal ribosomal protein uS4 family. Part of the 30S ribosomal subunit. Contacts protein S5. The interaction surface between S4 and S5 is involved in control of translational fidelity.

Its function is as follows. One of the primary rRNA binding proteins, it binds directly to 16S rRNA where it nucleates assembly of the body of the 30S subunit. In terms of biological role, with S5 and S12 plays an important role in translational accuracy. The protein is Small ribosomal subunit protein uS4 of Saccharophagus degradans (strain 2-40 / ATCC 43961 / DSM 17024).